The sequence spans 348 residues: NADH-ubiquinone oxidoreductase chain 2 (348 aa).

9 consecutive transmembrane segments (helical) span residues 13-33 (VITGTLITMLSSHWFLAWAGL), 60-80 (FLAQSTASMILMMAIISNNLL), 96-116 (PLAMTIALTMKLGMAPFHFWV), 124-144 (PLTSGLLLLTWQKLAPISIMY), 150-170 (INTHILLILSTLSIAVGSWGG), 200-220 (TITTLYLITYITLTTTMFLTL), 241-261 (LMPLMTSTLLSLGGLPPLTGF), 278-298 (IIPTIMITMTLLNLYFYMRLI), and 325-345 (LFIPALITISTLLLPISPLIL).

The protein belongs to the complex I subunit 2 family. As to quaternary structure, core subunit of respiratory chain NADH dehydrogenase (Complex I) which is composed of 45 different subunits. Interacts with TMEM242.

It is found in the mitochondrion inner membrane. The catalysed reaction is a ubiquinone + NADH + 5 H(+)(in) = a ubiquinol + NAD(+) + 4 H(+)(out). Core subunit of the mitochondrial membrane respiratory chain NADH dehydrogenase (Complex I) which catalyzes electron transfer from NADH through the respiratory chain, using ubiquinone as an electron acceptor. Essential for the catalytic activity and assembly of complex I. The protein is NADH-ubiquinone oxidoreductase chain 2 of Papio hamadryas (Hamadryas baboon).